A 514-amino-acid chain; its full sequence is ATP synthase subunit alpha (514 aa).

170–177 (GDRQIGKT) lines the ATP pocket.

This sequence belongs to the ATPase alpha/beta chains family. As to quaternary structure, F-type ATPases have 2 components, CF(1) - the catalytic core - and CF(0) - the membrane proton channel. CF(1) has five subunits: alpha(3), beta(3), gamma(1), delta(1), epsilon(1). CF(0) has three main subunits: a(1), b(2) and c(9-12). The alpha and beta chains form an alternating ring which encloses part of the gamma chain. CF(1) is attached to CF(0) by a central stalk formed by the gamma and epsilon chains, while a peripheral stalk is formed by the delta and b chains.

The protein localises to the cell inner membrane. It carries out the reaction ATP + H2O + 4 H(+)(in) = ADP + phosphate + 5 H(+)(out). In terms of biological role, produces ATP from ADP in the presence of a proton gradient across the membrane. The alpha chain is a regulatory subunit. The protein is ATP synthase subunit alpha of Marinobacter nauticus (strain ATCC 700491 / DSM 11845 / VT8) (Marinobacter aquaeolei).